The primary structure comprises 424 residues: CinA-like protein (424 aa).

This sequence belongs to the CinA family.

This is CinA-like protein from Prochlorococcus marinus (strain AS9601).